Consider the following 453-residue polypeptide: Bifunctional protein GlmU (453 aa).

Residues 1–228 form a pyrophosphorylase region; it reads MPHWAAVIMA…VHEALGINSR (228 aa). Residues Lys-23, Gln-73, 78–79, 100–102, Gly-139, Glu-153, Asn-168, and Asn-226 contribute to the UDP-N-acetyl-alpha-D-glucosamine site; these read GT and SGD. Asp-102 is a Mg(2+) binding site. Asn-226 provides a ligand contact to Mg(2+). A linker region spans residues 229–249; that stretch reads AQLAAAEDVARQRILSYWMEE. The segment at 250-453 is N-acetyltransferase; sequence GVTIIDPRST…IENWVRNKKK (204 aa). UDP-N-acetyl-alpha-D-glucosamine is bound by residues Arg-331 and Lys-349. The Proton acceptor role is filled by His-361. Residues Tyr-364 and Asn-375 each coordinate UDP-N-acetyl-alpha-D-glucosamine. Acetyl-CoA is bound by residues Ala-378, 384 to 385, Ser-403, Ala-421, and Arg-438; that span reads NY.

It in the N-terminal section; belongs to the N-acetylglucosamine-1-phosphate uridyltransferase family. In the C-terminal section; belongs to the transferase hexapeptide repeat family. Homotrimer. The cofactor is Mg(2+).

The protein resides in the cytoplasm. It catalyses the reaction alpha-D-glucosamine 1-phosphate + acetyl-CoA = N-acetyl-alpha-D-glucosamine 1-phosphate + CoA + H(+). It carries out the reaction N-acetyl-alpha-D-glucosamine 1-phosphate + UTP + H(+) = UDP-N-acetyl-alpha-D-glucosamine + diphosphate. It participates in nucleotide-sugar biosynthesis; UDP-N-acetyl-alpha-D-glucosamine biosynthesis; N-acetyl-alpha-D-glucosamine 1-phosphate from alpha-D-glucosamine 6-phosphate (route II): step 2/2. Its pathway is nucleotide-sugar biosynthesis; UDP-N-acetyl-alpha-D-glucosamine biosynthesis; UDP-N-acetyl-alpha-D-glucosamine from N-acetyl-alpha-D-glucosamine 1-phosphate: step 1/1. The protein operates within bacterial outer membrane biogenesis; LPS lipid A biosynthesis. Its function is as follows. Catalyzes the last two sequential reactions in the de novo biosynthetic pathway for UDP-N-acetylglucosamine (UDP-GlcNAc). The C-terminal domain catalyzes the transfer of acetyl group from acetyl coenzyme A to glucosamine-1-phosphate (GlcN-1-P) to produce N-acetylglucosamine-1-phosphate (GlcNAc-1-P), which is converted into UDP-GlcNAc by the transfer of uridine 5-monophosphate (from uridine 5-triphosphate), a reaction catalyzed by the N-terminal domain. In Desulfitobacterium hafniense (strain DSM 10664 / DCB-2), this protein is Bifunctional protein GlmU.